The primary structure comprises 385 residues: Spermidine/putrescine import ATP-binding protein PotA (385 aa).

An ABC transporter domain is found at 27–257 (ASFRAVSKHY…PANLFVAQFA (231 aa)). 59–66 (GPSGCGKT) serves as a coordination point for ATP.

The protein belongs to the ABC transporter superfamily. Spermidine/putrescine importer (TC 3.A.1.11.1) family. As to quaternary structure, the complex is composed of two ATP-binding proteins (PotA), two transmembrane proteins (PotB and PotC) and a solute-binding protein (PotD).

The protein resides in the cell inner membrane. It catalyses the reaction ATP + H2O + polyamine-[polyamine-binding protein]Side 1 = ADP + phosphate + polyamineSide 2 + [polyamine-binding protein]Side 1.. Part of the ABC transporter complex PotABCD involved in spermidine/putrescine import. Responsible for energy coupling to the transport system. The polypeptide is Spermidine/putrescine import ATP-binding protein PotA (Methylococcus capsulatus (strain ATCC 33009 / NCIMB 11132 / Bath)).